A 387-amino-acid polypeptide reads, in one-letter code: Succinyl-diaminopimelate desuccinylase (387 aa).

A Zn(2+)-binding site is contributed by histidine 74. Residue aspartate 76 is part of the active site. Position 107 (aspartate 107) interacts with Zn(2+). The active-site Proton acceptor is glutamate 142. Zn(2+)-binding residues include glutamate 143, glutamate 171, and histidine 360.

This sequence belongs to the peptidase M20A family. DapE subfamily. Homodimer. The cofactor is Zn(2+). Co(2+) is required as a cofactor.

It catalyses the reaction N-succinyl-(2S,6S)-2,6-diaminopimelate + H2O = (2S,6S)-2,6-diaminopimelate + succinate. Its pathway is amino-acid biosynthesis; L-lysine biosynthesis via DAP pathway; LL-2,6-diaminopimelate from (S)-tetrahydrodipicolinate (succinylase route): step 3/3. Its function is as follows. Catalyzes the hydrolysis of N-succinyl-L,L-diaminopimelic acid (SDAP), forming succinate and LL-2,6-diaminopimelate (DAP), an intermediate involved in the bacterial biosynthesis of lysine and meso-diaminopimelic acid, an essential component of bacterial cell walls. This is Succinyl-diaminopimelate desuccinylase from Rhodopseudomonas palustris (strain BisA53).